Reading from the N-terminus, the 266-residue chain is Glucosamine-6-phosphate deaminase (266 aa).

Aspartate 72 (proton acceptor; for enolization step) is an active-site residue. The For ring-opening step role is filled by aspartate 141. Histidine 143 functions as the Proton acceptor; for ring-opening step in the catalytic mechanism. The active-site For ring-opening step is the glutamate 148.

This sequence belongs to the glucosamine/galactosamine-6-phosphate isomerase family. NagB subfamily. As to quaternary structure, homohexamer.

It catalyses the reaction alpha-D-glucosamine 6-phosphate + H2O = beta-D-fructose 6-phosphate + NH4(+). It participates in amino-sugar metabolism; N-acetylneuraminate degradation; D-fructose 6-phosphate from N-acetylneuraminate: step 5/5. With respect to regulation, allosterically activated by N-acetylglucosamine 6-phosphate (GlcNAc6P). Its function is as follows. Catalyzes the reversible isomerization-deamination of glucosamine 6-phosphate (GlcN6P) to form fructose 6-phosphate (Fru6P) and ammonium ion. The chain is Glucosamine-6-phosphate deaminase from Edwardsiella ictaluri (strain 93-146).